We begin with the raw amino-acid sequence, 239 residues long: MTKAPIAGNRTGRKLGQRVKNKKMKASSRQWLQRHINDPYVQRAQLEGYRARAAFKLLEIDEKYHILRGAKRIIDLGAAPGSWSQIAAKVTGSTDEDIRVAAIDFLEMAQLPGVWILQLDFLDPSAPGKLMEAVGGTPDLVISDMAAPTTGHHRTDHLRTMHLCEVAAHFAIEVLGEGGHFLTKTFQGGTERDLLAMLKQNFRQVVHVKPNSSRAESVEMFLLAKGFKGRKAEGDAEEA.

A disordered region spans residues 1-20 (MTKAPIAGNRTGRKLGQRVK). The segment covering 11–20 (TGRKLGQRVK) has biased composition (basic residues). Glycine 81, tryptophan 83, aspartate 104, aspartate 120, and aspartate 144 together coordinate S-adenosyl-L-methionine. Lysine 184 (proton acceptor) is an active-site residue.

This sequence belongs to the class I-like SAM-binding methyltransferase superfamily. RNA methyltransferase RlmE family.

It is found in the cytoplasm. The catalysed reaction is uridine(2552) in 23S rRNA + S-adenosyl-L-methionine = 2'-O-methyluridine(2552) in 23S rRNA + S-adenosyl-L-homocysteine + H(+). Its function is as follows. Specifically methylates the uridine in position 2552 of 23S rRNA at the 2'-O position of the ribose in the fully assembled 50S ribosomal subunit. The sequence is that of Ribosomal RNA large subunit methyltransferase E from Rhizobium etli (strain ATCC 51251 / DSM 11541 / JCM 21823 / NBRC 15573 / CFN 42).